The chain runs to 1075 residues: MFYGTHFIMSPPTKSKLKRQSQLLSSMLSRTLSYKYRDLDSTFSSLGASDDPAELSTQLSAPGVLKVFGDSVCTGTHYKSVLATGTSSARELVKEALERYALDPRQAGQYVLCDVVGQAGDAGQRWQARCFRVFGDSEKPLLIQELWKPREGLSRRFELRKRSDVEELAAKEVDTITAGINAQARRLQRSRAKGTPTPALGDARSSPPPRLRRTVSETSLSPVNALPAAAQGPEEPGPDAMRYSLYQSPHLLLLQGYSQQHDSLVYVLNRDRHTVGQRTPSSKPSISLSAPDILPLHCTIRRQPLPDSGQAAGRLVLEPIPGAHISVNFSEVGHRTVVLHHGDLLSLGLYYLLLFKDPAQAQPLPARALARLRAVPQSCRLCGAALGARGAASPTQAALPRRQQLLLEFEPHLEDTLLQRIMTLIEPGGDDHKLTPAFLLCLCIQHSATHFQPGTFGQLLLKIARLIRETVWEKTKELAEKQAQLQEPISLASCAMADLVPDLQPILFWMSNSIELLYFIQQKCPLYMQSMEEQLDITGSKESLFSCTLTASEEAMAVLEEVVLYAFQQCVYYVSKSLYICLPALLECPPFQTERRESWSSAPELPEELRRVVSVYQAALDLLRQLQVHPEVASQMLAYLFFFSGTLLLNQLLDRGPSLSCFHWPRGVQACARLQQLLEWMRSAGFGAAGEHFFQKLSCTLNLLATPRAQLIQMSWTALRAAFPALSPAQLHRLLTHYQLASAMGPMSTWEPGAQDSPEAFRSEDVLESYENPPPIVLPSDGFQVDLEANCLDDSIYQHLLYVRHFLWGLRSRASPGSPGRPGSGASQPVCPEGMHHVVLDGHLEAPSCPLAPRDPGPAAREVAPERTLPLRGAPWAQAPPGRQPSRGGSQAGPPHTDSSCLLTPPSTPLGPEPGDPDWPESGGPCGKALPERQRNGLSGLRGAAPEGDSAALAEESPPAPSSRSSSTEDFCYVFTVELERGPSGLGMGLIDGMHTHLGAPGLYIQTLLPGSPAAADGRLSLGDRILEVNGSSLLGLGYLRAVDLIRHGGKKMRFLVAKSDVETAKKIHFRTPPL.

The 104-residue stretch at 61–164 (APGVLKVFGD…RRFELRKRSD (104 aa)) folds into the Ras-associating domain. The disordered stretch occupies residues 183-237 (QARRLQRSRAKGTPTPALGDARSSPPPRLRRTVSETSLSPVNALPAAAQGPEEPG). Phosphoserine is present on residues S206, S216, S219, and S221. Positions 225 to 234 (ALPAAAQGPE) are enriched in low complexity. The 76-residue stretch at 314-389 (RLVLEPIPGA…RLCGAALGAR (76 aa)) folds into the FHA domain. S393 carries the phosphoserine modification. The Dilute domain occupies 497-764 (ADLVPDLQPI…QDSPEAFRSE (268 aa)). Positions 872 to 967 (RGAPWAQAPP…PPAPSSRSSS (96 aa)) are disordered. S890 carries the post-translational modification Phosphoserine. The span at 950–967 (SAALAEESPPAPSSRSSS) shows a compositional bias: low complexity. The PDZ domain maps to 976–1061 (TVELERGPSG…KMRFLVAKSD (86 aa)).

Belongs to the RADIL family. Interacts with RAP1A; in a GTP-dependent manner. Does not interact with members of the Ras family. Interacts (via PDZ domain) with KIF14; is recruited to the microtubule network restricting its interaction with activated RAP1A.

Functionally, downstream effector of Rap required for cell adhesion and migration of neural crest precursors during development. This is Ras-associating and dilute domain-containing protein (RADIL) from Homo sapiens (Human).